A 321-amino-acid chain; its full sequence is Transaldolase (321 aa).

The Schiff-base intermediate with substrate role is filled by Lys132.

This sequence belongs to the transaldolase family. Type 1 subfamily. Homodimer.

Its subcellular location is the cytoplasm. The enzyme catalyses D-sedoheptulose 7-phosphate + D-glyceraldehyde 3-phosphate = D-erythrose 4-phosphate + beta-D-fructose 6-phosphate. It participates in carbohydrate degradation; pentose phosphate pathway; D-glyceraldehyde 3-phosphate and beta-D-fructose 6-phosphate from D-ribose 5-phosphate and D-xylulose 5-phosphate (non-oxidative stage): step 2/3. Its function is as follows. Transaldolase is important for the balance of metabolites in the pentose-phosphate pathway. The polypeptide is Transaldolase (Marinobacter nauticus (strain ATCC 700491 / DSM 11845 / VT8) (Marinobacter aquaeolei)).